Here is a 344-residue protein sequence, read N- to C-terminus: Mitochondrial genome maintenance exonuclease 1 (344 aa).

Catalysis depends on residues Asp-238, Asp-251, and Lys-253. Ser-343 carries the post-translational modification Phosphoserine.

It belongs to the MGME1 family.

Its subcellular location is the mitochondrion. Functionally, metal-dependent single-stranded DNA (ssDNA) exonuclease involved in mitochondrial genome maintenance. Has preference for 5'-3' exonuclease activity but is also capable of endonuclease activity on linear substrates. Necessary for maintenance of proper 7S DNA levels. Probably involved in mitochondrial DNA (mtDNA) repair, possibly via the processing of displaced DNA containing Okazaki fragments during RNA-primed DNA synthesis on the lagging strand or via processing of DNA flaps during long-patch base excision repair. Specifically binds 5-hydroxymethylcytosine (5hmC)-containing DNA in stem cells. This Homo sapiens (Human) protein is Mitochondrial genome maintenance exonuclease 1.